We begin with the raw amino-acid sequence, 429 residues long: Polypyrimidine tract-binding protein homolog 2 (429 aa).

At serine 2 the chain carries N-acetylserine. 3 consecutive RRM domains span residues 18–96 (KVLH…YSNR), 110–197 (GNVL…YSAH), and 243–323 (SNVL…YSRH). A disordered region spans residues 331-429 (NNDRSRDYTM…QHYGGPGPMH (99 aa)). Low complexity predominate over residues 367–381 (GGSHHQQQQQPQGGW). Residues 382 to 397 (VQPGGQGSMGMGGGGH) are compositionally biased toward gly residues.

The protein localises to the nucleus. In terms of biological role, plays a role in pre-mRNA splicing. Binds to the polypyrimidine tract of introns. May promote the binding of U2 snRNP to pre-mRNA. The polypeptide is Polypyrimidine tract-binding protein homolog 2 (Arabidopsis thaliana (Mouse-ear cress)).